The sequence spans 502 residues: Glycerol kinase (502 aa).

Thr-14 provides a ligand contact to ADP. Positions 14, 15, and 16 each coordinate ATP. Thr-14 lines the sn-glycerol 3-phosphate pocket. Arg-18 lines the ADP pocket. Sn-glycerol 3-phosphate-binding residues include Arg-84, Glu-85, Tyr-137, and Asp-247. Residues Arg-84, Glu-85, Tyr-137, Asp-247, and Gln-248 each contribute to the glycerol site. The ADP site is built by Thr-269 and Gly-312. ATP is bound by residues Thr-269, Gly-312, Gln-316, and Gly-413. ADP-binding residues include Gly-413 and Asn-417.

It belongs to the FGGY kinase family. In terms of assembly, homotetramer and homodimer (in equilibrium). Heterodimer with EIIA-Glc. Binds 1 zinc ion per glycerol kinase EIIA-Glc dimer. The zinc ion is important for dimerization.

It catalyses the reaction glycerol + ATP = sn-glycerol 3-phosphate + ADP + H(+). It participates in polyol metabolism; glycerol degradation via glycerol kinase pathway; sn-glycerol 3-phosphate from glycerol: step 1/1. With respect to regulation, activity of this regulatory enzyme is affected by several metabolites. Allosterically and non-competitively inhibited by fructose 1,6-bisphosphate (FBP) and unphosphorylated phosphocarrier protein EIIA-Glc (III-Glc), an integral component of the bacterial phosphotransferase (PTS) system. Its function is as follows. Key enzyme in the regulation of glycerol uptake and metabolism. Catalyzes the phosphorylation of glycerol to yield sn-glycerol 3-phosphate. In Photorhabdus laumondii subsp. laumondii (strain DSM 15139 / CIP 105565 / TT01) (Photorhabdus luminescens subsp. laumondii), this protein is Glycerol kinase.